The sequence spans 247 residues: DNA-directed RNA polymerase subunit Rpo3 (247 aa).

Belongs to the archaeal Rpo3/eukaryotic RPB3 RNA polymerase subunit family. Part of the RNA polymerase complex.

The protein localises to the cytoplasm. The enzyme catalyses RNA(n) + a ribonucleoside 5'-triphosphate = RNA(n+1) + diphosphate. Its function is as follows. DNA-dependent RNA polymerase (RNAP) catalyzes the transcription of DNA into RNA using the four ribonucleoside triphosphates as substrates. This is DNA-directed RNA polymerase subunit Rpo3 from Natronomonas pharaonis (strain ATCC 35678 / DSM 2160 / CIP 103997 / JCM 8858 / NBRC 14720 / NCIMB 2260 / Gabara) (Halobacterium pharaonis).